The sequence spans 121 residues: Small ribosomal subunit protein uS13 (121 aa).

Residues 91-121 (HRRGLPVRGQNSKNNARTRKGPRRTVANKKK) form a disordered region. Basic residues predominate over residues 106–121 (ARTRKGPRRTVANKKK).

It belongs to the universal ribosomal protein uS13 family. As to quaternary structure, part of the 30S ribosomal subunit. Forms a loose heterodimer with protein S19. Forms two bridges to the 50S subunit in the 70S ribosome.

Its function is as follows. Located at the top of the head of the 30S subunit, it contacts several helices of the 16S rRNA. In the 70S ribosome it contacts the 23S rRNA (bridge B1a) and protein L5 of the 50S subunit (bridge B1b), connecting the 2 subunits; these bridges are implicated in subunit movement. Contacts the tRNAs in the A and P-sites. The sequence is that of Small ribosomal subunit protein uS13 from Bacillus cereus (strain ZK / E33L).